We begin with the raw amino-acid sequence, 516 residues long: GMP synthase [glutamine-hydrolyzing] (516 aa).

The 195-residue stretch at 5-199 folds into the Glutamine amidotransferase type-1 domain; the sequence is PIVILDFGSQ…ARKICGITSK (195 aa). Cys82 serves as the catalytic Nucleophile. Active-site residues include His173 and Glu175. In terms of domain architecture, GMPS ATP-PPase spans 200 to 391; that stretch reads WDMGHFAKEQ…LGLPREMVYR (192 aa). 227-233 serves as a coordination point for ATP; it reads SGGVDSS.

As to quaternary structure, homodimer.

It carries out the reaction XMP + L-glutamine + ATP + H2O = GMP + L-glutamate + AMP + diphosphate + 2 H(+). Its pathway is purine metabolism; GMP biosynthesis; GMP from XMP (L-Gln route): step 1/1. Functionally, catalyzes the synthesis of GMP from XMP. The polypeptide is GMP synthase [glutamine-hydrolyzing] (Nitratiruptor sp. (strain SB155-2)).